The following is a 381-amino-acid chain: cAMP-dependent protein kinase type I-beta regulatory subunit (381 aa).

Residues 2 to 136 (ASPPACPSEE…ALAKAISKNV (135 aa)) form a dimerization and phosphorylation region. S3 is subject to Phosphoserine. At Y21 the chain carries 3'-nitrotyrosine. A disordered region spans residues 67–98 (ARQKSNSQSDSHDEEVSPTPPNPVVKARRRRG). Phosphoserine occurs at positions 77 and 83. T85 is modified (phosphothreonine). A Pseudophosphorylation motif motif is present at residues 96 to 100 (RRGGV). Residue R97 is modified to Omega-N-methylarginine. Residues 137–254 (LFAH…SKVS), E202, R211, 255–381 (ILES…SLTV), E326, and R335 contribute to the 3',5'-cyclic AMP site.

The protein belongs to the cAMP-dependent kinase regulatory chain family. As to quaternary structure, the inactive holoenzyme is composed of two regulatory chains and two catalytic chains. Activation by cAMP releases the two active catalytic monomers and the regulatory dimer. Interacts with PRKX; regulates this cAMP-dependent protein kinase. Interacts with C2orf88/smAKAP; this interaction may target PRKAR1B to the plasma membrane. In terms of processing, the pseudophosphorylation site binds to the substrate-binding region of the catalytic chain, resulting in the inhibition of its activity. As to expression, four types of regulatory chains are found: I-alpha, I-beta, II-alpha, and II-beta. Their expression varies among tissues and is in some cases constitutive and in others inducible.

The protein localises to the cell membrane. Functionally, regulatory subunit of the cAMP-dependent protein kinases involved in cAMP signaling in cells. This chain is cAMP-dependent protein kinase type I-beta regulatory subunit (PRKAR1B), found in Homo sapiens (Human).